Here is a 336-residue protein sequence, read N- to C-terminus: Glyoxylate reductase (336 aa).

NADP(+) is bound by residues 158–161, 180–182, and 239–241; these read FGRI, SRT, and IAR. Residues R241 and E270 contribute to the active site. H288 serves as the catalytic Proton donor. 288 to 290 is a binding site for NADP(+); it reads HIG.

This sequence belongs to the D-isomer specific 2-hydroxyacid dehydrogenase family. GyaR subfamily. In terms of assembly, homodimer.

It is found in the cytoplasm. It carries out the reaction glycolate + NAD(+) = glyoxylate + NADH + H(+). In Pyrococcus furiosus (strain ATCC 43587 / DSM 3638 / JCM 8422 / Vc1), this protein is Glyoxylate reductase.